We begin with the raw amino-acid sequence, 201 residues long: 3-isopropylmalate dehydratase small subunit (201 aa).

It belongs to the LeuD family. LeuD type 1 subfamily. Heterodimer of LeuC and LeuD.

The enzyme catalyses (2R,3S)-3-isopropylmalate = (2S)-2-isopropylmalate. Its pathway is amino-acid biosynthesis; L-leucine biosynthesis; L-leucine from 3-methyl-2-oxobutanoate: step 2/4. Catalyzes the isomerization between 2-isopropylmalate and 3-isopropylmalate, via the formation of 2-isopropylmaleate. The polypeptide is 3-isopropylmalate dehydratase small subunit (Rhodopseudomonas palustris (strain BisA53)).